A 643-amino-acid chain; its full sequence is Rhophilin-1 (643 aa).

The interval 1-43 (MILEERPDGQGTGEESSRPQDDGSIRKGYGSFVQNQPGQLQSH) is disordered. Residues 15–25 (ESSRPQDDGSI) are compositionally biased toward basic and acidic residues. In terms of domain architecture, REM-1 spans 30–104 (GSFVQNQPGQ…LAELSTSVDV (75 aa)). Serine 31 carries the post-translational modification Phosphoserine. Positions 32–42 (FVQNQPGQLQS) are enriched in polar residues. Residues 115–462 (PMIPLGLKET…LAKYSQLERE (348 aa)) enclose the BRO1 domain. Positions 500 to 577 (PVHMTRGEGS…EGVSLQVVSL (78 aa)) constitute a PDZ domain.

It belongs to the RHPN family. In terms of assembly, binds specifically to GTP-Rho. Interacts with ROPN1. In terms of tissue distribution, highly expressed in testis.

Functionally, has no enzymatic activity. May serve as a target for Rho, and interact with some cytoskeletal component upon Rho binding or relay a Rho signal to other molecules. The chain is Rhophilin-1 (Rhpn1) from Mus musculus (Mouse).